A 513-amino-acid polypeptide reads, in one-letter code: Histidine ammonia-lyase (513 aa).

Positions 142–144 (ASG) form a cross-link, 5-imidazolinone (Ala-Gly). 2,3-didehydroalanine (Ser) is present on Ser143.

Belongs to the PAL/histidase family. In terms of processing, contains an active site 4-methylidene-imidazol-5-one (MIO), which is formed autocatalytically by cyclization and dehydration of residues Ala-Ser-Gly.

The protein resides in the cytoplasm. The enzyme catalyses L-histidine = trans-urocanate + NH4(+). The protein operates within amino-acid degradation; L-histidine degradation into L-glutamate; N-formimidoyl-L-glutamate from L-histidine: step 1/3. This is Histidine ammonia-lyase from Mesorhizobium japonicum (strain LMG 29417 / CECT 9101 / MAFF 303099) (Mesorhizobium loti (strain MAFF 303099)).